Consider the following 165-residue polypeptide: Shikimate kinase (165 aa).

An ATP-binding site is contributed by 11–16 (GAGKTT). Mg(2+) is bound at residue T15. Substrate-binding residues include D33, R57, and G78. ATP is bound at residue R116. Substrate is bound at residue R134.

This sequence belongs to the shikimate kinase family. As to quaternary structure, monomer. The cofactor is Mg(2+).

It localises to the cytoplasm. It catalyses the reaction shikimate + ATP = 3-phosphoshikimate + ADP + H(+). Its pathway is metabolic intermediate biosynthesis; chorismate biosynthesis; chorismate from D-erythrose 4-phosphate and phosphoenolpyruvate: step 5/7. In terms of biological role, catalyzes the specific phosphorylation of the 3-hydroxyl group of shikimic acid using ATP as a cosubstrate. In Bacillus mycoides (strain KBAB4) (Bacillus weihenstephanensis), this protein is Shikimate kinase.